The following is a 138-amino-acid chain: Putative pre-16S rRNA nuclease (138 aa).

The protein belongs to the YqgF nuclease family.

It is found in the cytoplasm. Could be a nuclease involved in processing of the 5'-end of pre-16S rRNA. This Salmonella dublin (strain CT_02021853) protein is Putative pre-16S rRNA nuclease.